The primary structure comprises 184 residues: MTQAKLETEVSKYMSYVLRHAPEAAGLTLDAEGWVSFDELEKALTSKYDVSRADIIEIVENNPKNRFTIVDNRIRANQGHSVDVDLALTPVEPPAALYHGTSSANWHSIEREGLKKMQRHHVHLSADVETAKIVATRRKGEYLILRVDAARMFSEGHSFFVSDNGVWLAESVPVQYLSPDAGTP.

This sequence belongs to the KptA/TPT1 family.

Its function is as follows. Removes the 2'-phosphate from RNA via an intermediate in which the phosphate is ADP-ribosylated by NAD followed by a presumed transesterification to release the RNA and generate ADP-ribose 1''-2''-cyclic phosphate (APPR&gt;P). May function as an ADP-ribosylase. The polypeptide is Probable RNA 2'-phosphotransferase (Rhizobium leguminosarum bv. trifolii (strain WSM2304)).